Reading from the N-terminus, the 283-residue chain is Shikimate dehydrogenase (NADP(+)) (283 aa).

Residues 16 to 18 (SLS) and Thr-63 each bind shikimate. Lys-67 acts as the Proton acceptor in catalysis. Residue Asp-79 coordinates NADP(+). The shikimate site is built by Asn-88 and Asp-103. NADP(+)-binding positions include 128–132 (GAGGA) and Gly-243.

Belongs to the shikimate dehydrogenase family. As to quaternary structure, homodimer.

It carries out the reaction shikimate + NADP(+) = 3-dehydroshikimate + NADPH + H(+). Its pathway is metabolic intermediate biosynthesis; chorismate biosynthesis; chorismate from D-erythrose 4-phosphate and phosphoenolpyruvate: step 4/7. In terms of biological role, involved in the biosynthesis of the chorismate, which leads to the biosynthesis of aromatic amino acids. Catalyzes the reversible NADPH linked reduction of 3-dehydroshikimate (DHSA) to yield shikimate (SA). The sequence is that of Shikimate dehydrogenase (NADP(+)) from Xanthomonas euvesicatoria pv. vesicatoria (strain 85-10) (Xanthomonas campestris pv. vesicatoria).